The following is a 437-amino-acid chain: UDP-N-acetylmuramate--L-alanine ligase (437 aa).

An ATP-binding site is contributed by 108 to 114; it reads GAHGKTS.

This sequence belongs to the MurCDEF family.

It is found in the cytoplasm. It catalyses the reaction UDP-N-acetyl-alpha-D-muramate + L-alanine + ATP = UDP-N-acetyl-alpha-D-muramoyl-L-alanine + ADP + phosphate + H(+). The protein operates within cell wall biogenesis; peptidoglycan biosynthesis. In terms of biological role, cell wall formation. The chain is UDP-N-acetylmuramate--L-alanine ligase from Staphylococcus aureus (strain MRSA252).